The chain runs to 486 residues: V-type proton ATPase subunit B1 (486 aa).

Position 2 is an N-acetylglycine (Gly2).

Belongs to the ATPase alpha/beta chains family. In terms of assembly, V-ATPase is a heteromultimeric enzyme composed of a peripheral catalytic V1 complex (components A to H) attached to an integral membrane V0 proton pore complex (components: a, c, c'', d and e).

It localises to the vacuole membrane. Its function is as follows. Non-catalytic subunit of the peripheral V1 complex of vacuolar ATPase. V-ATPase is responsible for acidifying a variety of intracellular compartments in eukaryotic cells. The chain is V-type proton ATPase subunit B1 (VHA-B1) from Arabidopsis thaliana (Mouse-ear cress).